We begin with the raw amino-acid sequence, 758 residues long: Vitamin K-dependent gamma-carboxylase (758 aa).

The tract at residues 1 to 34 is disordered; it reads MAVSARPARAPRGPDKVKKDKAAQTSGPRQGSQM. N-acetylalanine is present on alanine 2. Residues 2–60 are Cytoplasmic-facing; it reads AVSARPARAPRGPDKVKKDKAAQTSGPRQGSQMGKLLGFEWTDVSSWERLVTLLNRPTD. Basic and acidic residues predominate over residues 12–22; that stretch reads RGPDKVKKDKA. Over residues 23 to 33 the composition is skewed to polar residues; that stretch reads AQTSGPRQGSQ. Residues 61–81 form a helical membrane-spanning segment; it reads PASLAVFRFLFGLMMVLDIPQ. Residues 82–113 lie on the Lumenal side of the membrane; that stretch reads ERGLSSLDRRYLDGLEVCRFPLLDALQPLPLD. Cysteine 99 and cysteine 450 are joined by a disulfide. Residues 114 to 134 form a helical membrane-spanning segment; the sequence is WMYLVYTIMFLGALGMMLGLC. Topologically, residues 135 to 136 are cytoplasmic; that stretch reads YR. Residues 137-157 traverse the membrane as a helical segment; the sequence is ISCVLFLLPYWYVFLLDKTSW. Residues 158 to 292 lie on the Lumenal side of the membrane; that stretch reads NNHSYLYGLL…VSYFHCMNSQ (135 aa). A helical membrane pass occupies residues 293 to 313; it reads LFSIGMFPYVMLASSPLFCSP. Residues 314–361 lie on the Cytoplasmic side of the membrane; the sequence is EWPRKLVAHCPKKLQELLPLRTAPQPSTSCMYKRSRARGSQKPGLRHQ. The chain crosses the membrane as a helical span at residues 362-382; that stretch reads LSTAFTLLYLLEQLFLPYSHF. Residues 383 to 758 are Lumenal-facing; that stretch reads LTQGYNNWTN…PDSHPVHSEF (376 aa). Residues 726–758 form a disordered region; the sequence is RPFEPAGEPSPVNTDSSNPNPPEPDSHPVHSEF. The segment covering 749–758 has biased composition (basic and acidic residues); that stretch reads PDSHPVHSEF.

This sequence belongs to the vitamin K-dependent gamma-carboxylase family. As to quaternary structure, monomer. May interact with CALU.

It localises to the endoplasmic reticulum membrane. The catalysed reaction is 4-carboxy-L-glutamyl-[protein] + 2,3-epoxyphylloquinone + H2O + H(+) = phylloquinol + L-glutamyl-[protein] + CO2 + O2. Functionally, mediates the vitamin K-dependent carboxylation of glutamate residues to calcium-binding gamma-carboxyglutamate (Gla) residues with the concomitant conversion of the reduced hydroquinone form of vitamin K to vitamin K epoxide. Catalyzes gamma-carboxylation of various proteins, such as blood coagulation factors (F2, F7, F9 and F10), osteocalcin (BGLAP) or matrix Gla protein (MGP). The protein is Vitamin K-dependent gamma-carboxylase (GGCX) of Ovis aries (Sheep).